The following is a 309-amino-acid chain: MILTVTLNPAIDVSYPLDELKCDTVNRVVDVTKTPGGKGLNVCRVLNDFGETVKATGCIGGESGDFIINHLPDSILSRFYKISGDTRTCIAILHEGNQTEILEKGPLLSVNEIDGFTHHFKYLLNDVDVVTLSDSLPAGMPDDYYQKLIGIANLNGKKTVLDCSGNALEAVLKGDSKPTVIKPNLEELSQLLGKEMTKDFDALKEVLQDKLFDGIEWIIVSLGADGVFAKHKDTFYKVDIPKIKIVSAVGSGDSTVAGIASGLANDEDDRALLTKANVLGMLNAQEKTTGHVNMANYDKLYQSIKVKEV.

It belongs to the carbohydrate kinase PfkB family. LacC subfamily.

The catalysed reaction is D-tagatofuranose 6-phosphate + ATP = D-tagatofuranose 1,6-bisphosphate + ADP + H(+). The protein operates within carbohydrate metabolism; D-tagatose 6-phosphate degradation; D-glyceraldehyde 3-phosphate and glycerone phosphate from D-tagatose 6-phosphate: step 1/2. The chain is Tagatose-6-phosphate kinase from Streptococcus pyogenes serotype M6 (strain ATCC BAA-946 / MGAS10394).